The primary structure comprises 365 residues: Glycolaldehyde reductase (365 aa).

NAD(+) is bound by residues Asp-37, Gly-94, Lys-95, Thr-116, Ser-119, Ser-125, Leu-127, and Tyr-131. Residues Asp-171, His-254, and His-271 each coordinate Zn(2+).

Belongs to the iron-containing alcohol dehydrogenase family. The cofactor is Zn(2+).

The catalysed reaction is ethylene glycol + NAD(+) = glycolaldehyde + NADH + H(+). Its activity is regulated as follows. Is subject to substrate inhibition. In terms of biological role, oxidoreductase involved in the non-carboxylating pentose bisphosphate pathway, a nucleoside degradation pathway present in some halophilic archaea. Catalyzes the reduction of glycolaldehyde to ethylene glycol. Cannot catalyze the oxidation of glycerol 1-phosphate nor the reduction of dihydroxyacetone phosphate (DHAP). The protein is Glycolaldehyde reductase of Halobacterium salinarum (strain ATCC 700922 / JCM 11081 / NRC-1) (Halobacterium halobium).